The primary structure comprises 72 residues: Heat-stable enterotoxin A2 (72 aa).

A signal peptide spans methionine 1 to alanine 19. The propeptide occupies glutamine 20 to methionine 53. 3 disulfides stabilise this stretch: cysteine 59–cysteine 64, cysteine 60–cysteine 68, and cysteine 63–cysteine 71.

Belongs to the heat-stable enterotoxin family.

It localises to the secreted. Its function is as follows. Toxin which activates the particulate form of guanylate cyclase and increases cyclic GMP levels within the host intestinal epithelial cells. The chain is Heat-stable enterotoxin A2 (sta2) from Escherichia coli.